The primary structure comprises 101 residues: Urease subunit beta (101 aa).

Belongs to the urease beta subunit family. In terms of assembly, heterotrimer of UreA (gamma), UreB (beta) and UreC (alpha) subunits. Three heterotrimers associate to form the active enzyme.

Its subcellular location is the cytoplasm. The catalysed reaction is urea + 2 H2O + H(+) = hydrogencarbonate + 2 NH4(+). Its pathway is nitrogen metabolism; urea degradation; CO(2) and NH(3) from urea (urease route): step 1/1. The chain is Urease subunit beta from Mesorhizobium japonicum (strain LMG 29417 / CECT 9101 / MAFF 303099) (Mesorhizobium loti (strain MAFF 303099)).